A 235-amino-acid polypeptide reads, in one-letter code: Cytidylate kinase (235 aa).

ATP is bound at residue 16-24 (GPAASGKST).

This sequence belongs to the cytidylate kinase family. Type 1 subfamily.

The protein resides in the cytoplasm. The catalysed reaction is CMP + ATP = CDP + ADP. It carries out the reaction dCMP + ATP = dCDP + ADP. In Chloroherpeton thalassium (strain ATCC 35110 / GB-78), this protein is Cytidylate kinase.